We begin with the raw amino-acid sequence, 274 residues long: Large ribosomal subunit protein uL2cz/uL2cy (274 aa).

Disordered stretches follow at residues 1-23 (MAIH…SQVK) and 224-274 (NPVD…RRSK).

Belongs to the universal ribosomal protein uL2 family. As to quaternary structure, part of the 50S ribosomal subunit.

Its subcellular location is the plastid. The protein resides in the chloroplast. This chain is Large ribosomal subunit protein uL2cz/uL2cy (rpl2-A), found in Vitis vinifera (Grape).